The primary structure comprises 1199 residues: RNA-binding protein 20 (1199 aa).

3 disordered regions span residues 1–55, 163–186, and 320–346; these read MVLA…PQAS, PSTA…SLPS, and ERPP…PASQ. Low complexity predominate over residues 25–42; it reads VMPGVQGPSVPQGQQGMQ. Over residues 43–52 the composition is skewed to pro residues; the sequence is PLPPPPPPQP. A compositionally biased stretch (low complexity) spans 170–183; that stretch reads SPPSQTGGPGPSVS. Residues 410-444 form a U1-type zinc finger; the sequence is HLPHICSICDKKVFDLKDWELHVKGKLHAQKCLLF. Positions 520-595 constitute an RRM domain; that stretch reads RVVHICNLPE…EKLLIRMSTR (76 aa). Residues 626-636 are compositionally biased toward basic and acidic residues; sequence EADRYGPERPR. 3 disordered regions span residues 626-685, 720-884, and 944-1077; these read EADR…NGED, REKY…YPTN, and GETL…SQAC. Residues 630 to 649 form an RS region; it reads YGPERPRSRSPMSRSLSPRS. Phosphoserine is present on residues S637, S639, S642, S644, and S651. Low complexity predominate over residues 638–649; that stretch reads RSPMSRSLSPRS. Positions 667–685 are enriched in basic and acidic residues; it reads YAWRDEDRETVPRRENGED. A Phosphoserine modification is found at S728. Basic and acidic residues-rich tracts occupy residues 739–758, 770–831, and 859–868; these read KGRE…DKYP, RKEE…KESQ, and ENTRTKKGQD. S787 carries the phosphoserine modification. Residues S871, S873, and S955 each carry the phosphoserine modification. The segment covering 962–971 has biased composition (polar residues); it reads VPSTSASCPN. Residues S991, S1026, S1038, S1049, S1054, S1058, S1070, S1088, and S1093 each carry the phosphoserine modification. Positions 1042 to 1055 are enriched in basic and acidic residues; sequence DDCKARGSPEDGSH. Polar residues predominate over residues 1067 to 1077; it reads PTESDLQSQAC. Residues 1133-1164 form a Matrin-type zinc finger; the sequence is FYCKLCGLFYTSEEAAKVSHCRSTVHYRNLQK. The tract at residues 1172 to 1199 is disordered; that stretch reads EGLKETEGTDSPSPERGGIGPHLERKKL. A phosphoserine mark is found at S1182 and S1184.

In terms of assembly, associates with components of the U1 and U2 U1 small nuclear ribonucleoprotein complexes. In terms of processing, phosphorylation regulates the subcellular localization. Phosphorylation of Ser-637 and Ser-639 in the RS (arginine/serine-rich) region promotes nuclear localization of the protein. In contrast, phosphorylation of the C-terminal disordered region promotes localization to cytoplasmic ribonucleoprotein granules. Predominantly expressed in striated muscle, with highest expression in the heart. In differentiating myoblasts, expression correlates with sarcomere assembly: expression peaks when alpha-actinin is localized mainly in mature Z bodies within the nascent myofiber and expression declines as the sarcomeres continue to mature. Also expressed in kidney.

It is found in the nucleus. The protein localises to the cytoplasm. It localises to the cytoplasmic ribonucleoprotein granule. RNA-binding protein that acts as a regulator of mRNA splicing of a subset of genes encoding key structural proteins involved in cardiac development, such as TTN (Titin), CACNA1C, CAMK2D or PDLIM5/ENH. Acts as a repressor of mRNA splicing: specifically binds the 5'UCUU-3' motif that is predominantly found within intronic sequences of pre-mRNAs, leading to the exclusion of specific exons in target transcripts. RBM20-mediated exon skipping is hormone-dependent and is essential for TTN isoform transition in both cardiac and skeletal muscles. RBM20-mediated exon skipping of TTN provides substrates for the formation of circular RNA (circRNAs) from the TTN transcripts. Together with RBM24, promotes the expression of short isoforms of PDLIM5/ENH in cardiomyocytes. The protein is RNA-binding protein 20 of Mus musculus (Mouse).